A 186-amino-acid polypeptide reads, in one-letter code: ATP synthase subunit b, chloroplastic (186 aa).

The helical transmembrane segment at 27 to 43 (IFETNILNLAVVLGILL) threads the bilayer.

The protein belongs to the ATPase B chain family. In terms of assembly, F-type ATPases have 2 components, F(1) - the catalytic core - and F(0) - the membrane proton channel. F(1) has five subunits: alpha(3), beta(3), gamma(1), delta(1), epsilon(1). F(0) has four main subunits: a(1), b(1), b'(1) and c(10-14). The alpha and beta chains form an alternating ring which encloses part of the gamma chain. F(1) is attached to F(0) by a central stalk formed by the gamma and epsilon chains, while a peripheral stalk is formed by the delta, b and b' chains.

It is found in the plastid. The protein resides in the chloroplast thylakoid membrane. Its function is as follows. F(1)F(0) ATP synthase produces ATP from ADP in the presence of a proton or sodium gradient. F-type ATPases consist of two structural domains, F(1) containing the extramembraneous catalytic core and F(0) containing the membrane proton channel, linked together by a central stalk and a peripheral stalk. During catalysis, ATP synthesis in the catalytic domain of F(1) is coupled via a rotary mechanism of the central stalk subunits to proton translocation. In terms of biological role, component of the F(0) channel, it forms part of the peripheral stalk, linking F(1) to F(0). The chain is ATP synthase subunit b, chloroplastic from Mesostigma viride (Green alga).